The primary structure comprises 286 residues: MKERLFIISQYLLPHHLLSRLAGCIAECRVRWFKNAFTTWFAKRYQVDMSQALVEDVTAYEHFNAFFTRALKDGARPLDQTPGAILSPADGAISQLGPIEHGRIFQAKGHSFSVLELLGGDAANAAPFMGGEFATVYLSPKDYHRVHMPLAGTLREMVYIPGRIFSVNQTTAENVPELFARNERVACIFDTERGPMAVVLVGAMIVASIETVWAGLVTPPKRELKTFRYDEAARAPIHLEKGAELGRFKLGSTAIVLFGPDQVKWVEELKAGSPVQMGQALAQSNA.

Residues aspartate 90, histidine 147, and serine 252 each act as charge relay system; for autoendoproteolytic cleavage activity in the active site. Serine 252 functions as the Schiff-base intermediate with substrate; via pyruvic acid; for decarboxylase activity in the catalytic mechanism. Residue serine 252 is modified to Pyruvic acid (Ser); by autocatalysis.

This sequence belongs to the phosphatidylserine decarboxylase family. PSD-B subfamily. Prokaryotic type I sub-subfamily. As to quaternary structure, heterodimer of a large membrane-associated beta subunit and a small pyruvoyl-containing alpha subunit. It depends on pyruvate as a cofactor. Is synthesized initially as an inactive proenzyme. Formation of the active enzyme involves a self-maturation process in which the active site pyruvoyl group is generated from an internal serine residue via an autocatalytic post-translational modification. Two non-identical subunits are generated from the proenzyme in this reaction, and the pyruvate is formed at the N-terminus of the alpha chain, which is derived from the carboxyl end of the proenzyme. The autoendoproteolytic cleavage occurs by a canonical serine protease mechanism, in which the side chain hydroxyl group of the serine supplies its oxygen atom to form the C-terminus of the beta chain, while the remainder of the serine residue undergoes an oxidative deamination to produce ammonia and the pyruvoyl prosthetic group on the alpha chain. During this reaction, the Ser that is part of the protease active site of the proenzyme becomes the pyruvoyl prosthetic group, which constitutes an essential element of the active site of the mature decarboxylase.

The protein resides in the cell membrane. It carries out the reaction a 1,2-diacyl-sn-glycero-3-phospho-L-serine + H(+) = a 1,2-diacyl-sn-glycero-3-phosphoethanolamine + CO2. It functions in the pathway phospholipid metabolism; phosphatidylethanolamine biosynthesis; phosphatidylethanolamine from CDP-diacylglycerol: step 2/2. Catalyzes the formation of phosphatidylethanolamine (PtdEtn) from phosphatidylserine (PtdSer). The polypeptide is Phosphatidylserine decarboxylase proenzyme (Pseudomonas fluorescens (strain Pf0-1)).